Reading from the N-terminus, the 304-residue chain is MSSVKPLVYAVIRFLREQSQMDAYTSDEQESLEVAIQCLETVFKISPEDTHLAVSQPLTEMFTNSVCKNDIRPLSNSVPEDVGKADQLKDEGNNHMKEENYAAAVDCYTQAIELDPNNAVYYCNRAAAQSKLSHYTDAIKDCEKAIAIDSKYSKAYGRMGLALTAMNKFEEAVTSYQKALDLDPENDSYKSNLKIAEQKLREVSSPTGTGLSFDMASLINNPAFITMAASLMQNPQVQQLMSGMMTNAIGGPAAGVGGLTDLSSLIQAGQQFAQQIQQQNPELIEQLRNHIRSRSFSSSADEHS.

4 TPR repeats span residues 15–49 (LREQ…SPED), 85–118 (ADQL…DPNN), 120–152 (VYYC…DSKY), and 153–186 (SKAY…DPEN). K131 carries the N6-acetyllysine modification. Phosphoserine is present on residues S293, S295, and S297.

It belongs to the SGT family. Homooligomerize.

Functionally, co-chaperone that binds directly to HSC70 and HSP70 and regulates their ATPase activity. This Mus musculus (Mouse) protein is Small glutamine-rich tetratricopeptide repeat-containing protein beta (Sgtb).